Reading from the N-terminus, the 132-residue chain is Small ribosomal subunit protein uS8 (132 aa).

The protein belongs to the universal ribosomal protein uS8 family. As to quaternary structure, part of the 30S ribosomal subunit. Contacts proteins S5 and S12.

In terms of biological role, one of the primary rRNA binding proteins, it binds directly to 16S rRNA central domain where it helps coordinate assembly of the platform of the 30S subunit. The sequence is that of Small ribosomal subunit protein uS8 from Cereibacter sphaeroides (strain ATCC 17025 / ATH 2.4.3) (Rhodobacter sphaeroides).